The following is a 210-amino-acid chain: MRRKPIIIGVTGGSGGGKTSVSRAILDSFPNARIAMIQHDSYYKDQAHLSFEERVKTNYDHPLAFDTDFMIEQLKELLKGRPVDIPVYDYKAHTRSDKTFRQEPQDVIIVEGILVLEDERLRDLMDIKLFVDTDDDIRIIRRIKRDMMERGRSLDSIIEQYTTVVKPMYHQFIEPSKRYADIIVPEGVSNVVAIDLINTKIASILAEIDR.

Residue 12 to 19 (GGSGGGKT) participates in ATP binding.

It belongs to the uridine kinase family.

It localises to the cytoplasm. The catalysed reaction is uridine + ATP = UMP + ADP + H(+). It carries out the reaction cytidine + ATP = CMP + ADP + H(+). It functions in the pathway pyrimidine metabolism; CTP biosynthesis via salvage pathway; CTP from cytidine: step 1/3. The protein operates within pyrimidine metabolism; UMP biosynthesis via salvage pathway; UMP from uridine: step 1/1. The protein is Uridine kinase of Streptococcus uberis (strain ATCC BAA-854 / 0140J).